The following is a 109-amino-acid chain: MTDFKRIPPEQAHAMRNAGAVIVDIRDPHSFANGHISGSRHLDNHSLPDFIAAADLDHPLIVTCYHGHSSQSAAAYLVNQGFSEVYSLDGGFELWRHTYPSDVEHDEQQ.

Residues R16–E104 enclose the Rhodanese domain. The Cysteine persulfide intermediate role is filled by C64.

The protein belongs to the GlpE family.

It localises to the cytoplasm. The catalysed reaction is thiosulfate + hydrogen cyanide = thiocyanate + sulfite + 2 H(+). The enzyme catalyses thiosulfate + [thioredoxin]-dithiol = [thioredoxin]-disulfide + hydrogen sulfide + sulfite + 2 H(+). Transferase that catalyzes the transfer of sulfur from thiosulfate to thiophilic acceptors such as cyanide or dithiols. May function in a CysM-independent thiosulfate assimilation pathway by catalyzing the conversion of thiosulfate to sulfite, which can then be used for L-cysteine biosynthesis. In Stutzerimonas stutzeri (strain A1501) (Pseudomonas stutzeri), this protein is Thiosulfate sulfurtransferase GlpE.